Consider the following 866-residue polypeptide: N-alpha-acetyltransferase 15, NatA auxiliary subunit (866 aa).

TPR repeat units lie at residues 46-79 (GETLAMKGLTLNCLGKKEEAYELVRRGLRNDLKS), 80-113 (HVCWHVYGLLQRSDKKYDEAIKCYRNALKWDKDN), 148-184 (RASWIGYAIAYHLLEDYEMAAKILEEFRKTQQTSPDK), and 224-257 (LAVEETKGELLLQLCRLEDAADVYRGLQERNPEN). K262 is subject to N6-acetyllysine. Position 302 is a phosphoserine (S302). TPR repeat units follow at residues 374–407 (LWVQYYLAQHYDKIGQPSIALEYINTAIESTPTL), 409–441 (ELFLVKAKIYKHAGNIKEAARWMDEAQALDTAD), and 485–522 (MWFQTECAQAYKAMNKFGEALKKCYEIERHFIEITDDQ). An interaction with HYPK region spans residues 500–866 (KFGEALKKCY…AEAEELANEI (367 aa)). Phosphoserine is present on residues S537 and S588. Basic and acidic residues predominate over residues 579–594 (EHEADTANMSDKELKK). A disordered region spans residues 579 to 642 (EHEADTANMS…EEIGGPKEEL (64 aa)). Positions 595–604 (LRNKQRRAQK) are enriched in basic residues. Over residues 606 to 621 (AQIEEEKKNAEKEKQQ) the composition is skewed to basic and acidic residues. The stretch at 672-705 (IETHLFAFEIYFRKEKFLLMLQSVKRAFAIDSSH) is one TPR 8 repeat. Residues K735 and K756 each carry the N6-acetyllysine modification. S855 and S856 each carry phosphoserine.

Component of the N-terminal acetyltransferase A (NatA) complex composed of NAA10 or probably NAA11 and NAA15. Interacts with XRCC6, NAA50 and XRCC5. Associates with HYPK when in a complex with NAA10. Interaction with HYPK reduces the capacity to interact with NAA50. Cleaved by caspases during apoptosis.

It localises to the cytoplasm. It is found in the nucleus. In terms of biological role, auxillary subunit of the N-terminal acetyltransferase A (NatA) complex which displays alpha (N-terminal) acetyltransferase activity. The NAT activity may be important for vascular, hematopoietic and neuronal growth and development. Required to control retinal neovascularization in adult ocular endothelial cells. In complex with XRCC6 and XRCC5 (Ku80), up-regulates transcription from the osteocalcin promoter. The polypeptide is N-alpha-acetyltransferase 15, NatA auxiliary subunit (NAA15) (Pongo abelii (Sumatran orangutan)).